We begin with the raw amino-acid sequence, 839 residues long: Flocculation protein FLO11 (839 aa).

An N-terminal signal peptide occupies residues 1–22 (MVSLRSIFTSSILAAGLTRAHG). Residues 24-194 (SGKTCPTSEV…PKKCSSDCGV (171 aa)) form the Flo11 1 domain. 4 disulfide bridges follow: cysteine 28–cysteine 188, cysteine 37–cysteine 167, cysteine 129–cysteine 192, and cysteine 143–cysteine 152. Residue asparagine 79 is glycosylated (N-linked (GlcNAc...) asparagine). The disordered stretch occupies residues 187–342 (KCSSDCGVEP…GPTCPTSEVS (156 aa)). Acidic residues predominate over residues 198-317 (TSDEPEEPTT…EPTTSEEPEE (120 aa)). The region spanning 332–502 (EGPTCPTSEV…PKKCSSNCGV (171 aa)) is the Flo11 2 domain. Asparagine 387 carries N-linked (GlcNAc...) asparagine glycosylation. A disordered region spans residues 496–606 (CSSNCGVEPT…LVPTTKTETD (111 aa)). A compositionally biased stretch (acidic residues) spans 506–592 (TSDEPEEPTT…PTTSDEEPGT (87 aa)). Residues 593 to 606 (TEEPLVPTTKTETD) show a composition bias toward low complexity.

The protein belongs to the flocculin family. Highly divergent.

Homophilic binding protein that enables kin discrimination in heterogeneous yeast populations by mediating homotypic cell-cell interactions during flocculation, a reversible and asexual process in which cells adhere to form aggregates (flocs). This chain is Flocculation protein FLO11, found in Komagataella phaffii (strain GS115 / ATCC 20864) (Yeast).